The following is a 305-amino-acid chain: Methionyl-tRNA formyltransferase (305 aa).

Residue 108-111 (SLLP) coordinates (6S)-5,6,7,8-tetrahydrofolate.

Belongs to the Fmt family.

The enzyme catalyses L-methionyl-tRNA(fMet) + (6R)-10-formyltetrahydrofolate = N-formyl-L-methionyl-tRNA(fMet) + (6S)-5,6,7,8-tetrahydrofolate + H(+). Its function is as follows. Attaches a formyl group to the free amino group of methionyl-tRNA(fMet). The formyl group appears to play a dual role in the initiator identity of N-formylmethionyl-tRNA by promoting its recognition by IF2 and preventing the misappropriation of this tRNA by the elongation apparatus. In Thermus thermophilus (strain ATCC BAA-163 / DSM 7039 / HB27), this protein is Methionyl-tRNA formyltransferase.